Reading from the N-terminus, the 929-residue chain is Protein translocase subunit SecA (929 aa).

Residues Gln-87, 105–109 (GEGKT), and Asp-512 contribute to the ATP site. Zn(2+)-binding residues include Cys-914, Cys-916, Cys-925, and His-926.

It belongs to the SecA family. In terms of assembly, monomer and homodimer. Part of the essential Sec protein translocation apparatus which comprises SecA, SecYEG and auxiliary proteins SecDF-YajC and YidC. Requires Zn(2+) as cofactor.

The protein resides in the cell inner membrane. Its subcellular location is the cytoplasm. It catalyses the reaction ATP + H2O + cellular proteinSide 1 = ADP + phosphate + cellular proteinSide 2.. Functionally, part of the Sec protein translocase complex. Interacts with the SecYEG preprotein conducting channel. Has a central role in coupling the hydrolysis of ATP to the transfer of proteins into and across the cell membrane, serving both as a receptor for the preprotein-SecB complex and as an ATP-driven molecular motor driving the stepwise translocation of polypeptide chains across the membrane. The sequence is that of Protein translocase subunit SecA from Psychrobacter arcticus (strain DSM 17307 / VKM B-2377 / 273-4).